Here is a 420-residue protein sequence, read N- to C-terminus: Argininosuccinate synthase (420 aa).

ATP is bound by residues 9–17 (AYSGGLDTS) and Ala-35. Tyr-86 and Ser-91 together coordinate L-citrulline. 114–122 (SHGCTGKGN) lines the ATP pocket. Residues Thr-118, Asn-122, and Asp-123 each contribute to the L-aspartate site. Asn-122 is a binding site for L-citrulline. Residues Arg-126, Ser-179, Ser-188, Glu-273, and Tyr-285 each coordinate L-citrulline.

It belongs to the argininosuccinate synthase family. Type 1 subfamily. In terms of assembly, homotetramer.

The protein localises to the cytoplasm. It carries out the reaction L-citrulline + L-aspartate + ATP = 2-(N(omega)-L-arginino)succinate + AMP + diphosphate + H(+). It functions in the pathway amino-acid biosynthesis; L-arginine biosynthesis; L-arginine from L-ornithine and carbamoyl phosphate: step 2/3. Catalyzes the eighth step in arginine biosynthesis. Also has a catabolic function as the first enzyme of citrulline utilization as nitrogen source via arginine and the reactions involved in the arginase pathway. In Saccharomyces cerevisiae (strain ATCC 204508 / S288c) (Baker's yeast), this protein is Argininosuccinate synthase (ARG1).